Consider the following 433-residue polypeptide: D-amino acid dehydrogenase (433 aa).

3–17 (VVILGSGVVGVASAW) is a binding site for FAD.

This sequence belongs to the DadA oxidoreductase family. FAD is required as a cofactor.

It carries out the reaction a D-alpha-amino acid + A + H2O = a 2-oxocarboxylate + AH2 + NH4(+). It participates in amino-acid degradation; D-alanine degradation; NH(3) and pyruvate from D-alanine: step 1/1. Functionally, oxidative deamination of D-amino acids. This is D-amino acid dehydrogenase from Erwinia tasmaniensis (strain DSM 17950 / CFBP 7177 / CIP 109463 / NCPPB 4357 / Et1/99).